The primary structure comprises 313 residues: Protoheme IX farnesyltransferase (313 aa).

Helical transmembrane passes span 32-52, 53-73, 120-140, 153-173, 180-200, 226-246, 248-268, and 284-304; these read VMSL…GDFH, PVLA…AGAL, VLVN…YVVI, IVIG…AVTG, LLLF…LALF, ILLY…LGYF, AVYG…AIRV, and LFKF…IEVV.

This sequence belongs to the UbiA prenyltransferase family. Protoheme IX farnesyltransferase subfamily.

It localises to the cell inner membrane. The enzyme catalyses heme b + (2E,6E)-farnesyl diphosphate + H2O = Fe(II)-heme o + diphosphate. Its pathway is porphyrin-containing compound metabolism; heme O biosynthesis; heme O from protoheme: step 1/1. Functionally, converts heme B (protoheme IX) to heme O by substitution of the vinyl group on carbon 2 of heme B porphyrin ring with a hydroxyethyl farnesyl side group. The sequence is that of Protoheme IX farnesyltransferase from Rhodopseudomonas palustris (strain BisB5).